Reading from the N-terminus, the 264-residue chain is tRNA pseudouridine synthase A (264 aa).

The active-site Nucleophile is the Asp-51. Residue Tyr-109 coordinates substrate.

The protein belongs to the tRNA pseudouridine synthase TruA family. In terms of assembly, homodimer.

The enzyme catalyses uridine(38/39/40) in tRNA = pseudouridine(38/39/40) in tRNA. In terms of biological role, formation of pseudouridine at positions 38, 39 and 40 in the anticodon stem and loop of transfer RNAs. This Vibrio parahaemolyticus serotype O3:K6 (strain RIMD 2210633) protein is tRNA pseudouridine synthase A.